A 93-amino-acid polypeptide reads, in one-letter code: Acylphosphatase (93 aa).

The Acylphosphatase-like domain occupies 6–93 (RAHILVSGEV…GDLGPFSVRH (88 aa)). Catalysis depends on residues Arg-21 and Asn-39.

The protein belongs to the acylphosphatase family.

The catalysed reaction is an acyl phosphate + H2O = a carboxylate + phosphate + H(+). This Anaeromyxobacter sp. (strain Fw109-5) protein is Acylphosphatase (acyP).